A 184-amino-acid chain; its full sequence is Photosystem I assembly protein Ycf4 (184 aa).

Helical transmembrane passes span 19 to 39 (ISNFCWACILFLGSLGFLLVG) and 57 to 77 (IVFFPQGIVMCFYGIAGLFIS).

The protein belongs to the Ycf4 family.

It localises to the plastid. The protein localises to the chloroplast thylakoid membrane. In terms of biological role, seems to be required for the assembly of the photosystem I complex. In Nymphaea alba (White water-lily), this protein is Photosystem I assembly protein Ycf4.